The chain runs to 686 residues: Endonuclease GajA (686 aa).

An ATPase domain region spans residues methionine 1 to threonine 423. Asparagine 52–threonine 56 contacts ATP. The interval phenylalanine 463–threonine 599 is toprim domain. A divalent metal cation contacts are provided by glutamate 472, glutamate 476, aspartate 559, and glutamate 604.

As to quaternary structure, homotetramer. Forms the core of the anti-phage defense complex. Interacts with GajB; 2 GajB dimers dock at opposite sides of the GajA complex to form a 4:4 GajA-GajB assembly (GajAB). GajAB interacts with Bacillus phage Phi3T Gad1 protein; this interaction forms a 4:4:8 GajAB-Gad1 complex and leads to GajAB inhibition. Requires Mg(2+) as cofactor.

Functionally, component of antiviral defense system Gabija type II, composed of GajA and GajB. Probably a nicking endonuclease that is strongly inhibited by physiological levels of nucleotides (NTP and dNTP). Expression of Gabija type II in B.subtilis (strain BEST7003) confers resistance to phages phi105, and SpBeta. During viral replication, when nucleotides are rapidly consumed, it is de-suppressed and degrades target DNA. This is Endonuclease GajA from Bacillus cereus (strain HuB5-5).